A 139-amino-acid polypeptide reads, in one-letter code: Low molecular weight protein-tyrosine-phosphatase PtpB (139 aa).

Cysteine 7 serves as the catalytic Nucleophile. Arginine 13 is an active-site residue. Aspartate 111 serves as the catalytic Proton donor.

It belongs to the low molecular weight phosphotyrosine protein phosphatase family.

It catalyses the reaction O-phospho-L-tyrosyl-[protein] + H2O = L-tyrosyl-[protein] + phosphate. Dephosphorylates the phosphotyrosine-containing proteins. The polypeptide is Low molecular weight protein-tyrosine-phosphatase PtpB (ptpB) (Staphylococcus epidermidis (strain ATCC 35984 / DSM 28319 / BCRC 17069 / CCUG 31568 / BM 3577 / RP62A)).